Reading from the N-terminus, the 484-residue chain is Glutamate--tRNA ligase (484 aa).

The 'HIGH' region signature appears at 11–21; it reads PSPTGYLHIGN. A 'KMSKS' region motif is present at residues 252 to 256; sequence KLSKR. Lys255 is a binding site for ATP.

Belongs to the class-I aminoacyl-tRNA synthetase family. Glutamate--tRNA ligase type 1 subfamily. In terms of assembly, monomer.

The protein localises to the cytoplasm. The catalysed reaction is tRNA(Glu) + L-glutamate + ATP = L-glutamyl-tRNA(Glu) + AMP + diphosphate. Its function is as follows. Catalyzes the attachment of glutamate to tRNA(Glu) in a two-step reaction: glutamate is first activated by ATP to form Glu-AMP and then transferred to the acceptor end of tRNA(Glu). This is Glutamate--tRNA ligase from Staphylococcus haemolyticus (strain JCSC1435).